The following is a 464-amino-acid chain: UDP-N-acetylmuramate--L-alanine ligase (464 aa).

Position 112–118 (112–118) interacts with ATP; sequence GTHGKTT.

The protein belongs to the MurCDEF family.

It localises to the cytoplasm. It catalyses the reaction UDP-N-acetyl-alpha-D-muramate + L-alanine + ATP = UDP-N-acetyl-alpha-D-muramoyl-L-alanine + ADP + phosphate + H(+). The protein operates within cell wall biogenesis; peptidoglycan biosynthesis. In terms of biological role, cell wall formation. This chain is UDP-N-acetylmuramate--L-alanine ligase, found in Acidithiobacillus ferrooxidans (strain ATCC 23270 / DSM 14882 / CIP 104768 / NCIMB 8455) (Ferrobacillus ferrooxidans (strain ATCC 23270)).